A 918-amino-acid chain; its full sequence is GPI ethanolamine phosphate transferase 3 (918 aa).

The chain crosses the membrane as a helical span at residues 16 to 36 (IGTWKYIQACIFFAIILISNF). N-linked (GlcNAc...) asparagine glycans are attached at residues Asn54, Asn71, Asn101, Asn197, and Asn399. 15 helical membrane passes run 429 to 449 (LFPM…LALL), 459 to 479 (MSAN…ILIL), 486 to 506 (SPFP…LNSF), 523 to 543 (FSIF…FTVW), 547 to 563 (LCHF…FCKC), 567 to 587 (MSPL…LQVI), 616 to 636 (TLIV…ILQL), 651 to 671 (LSIL…HHVF), 687 to 707 (SLAN…FFLL), 715 to 735 (INVI…LSFL), 738 to 758 (PLGH…IQLK), 762 to 782 (PSVG…SHFF), 813 to 833 (IFMF…IPLF), 853 to 873 (FSFI…AGFF), and 887 to 907 (FMLS…QCFG).

It belongs to the PIGG/PIGN/PIGO family. PIGO subfamily. Glycosylated.

It is found in the endoplasmic reticulum membrane. Its pathway is glycolipid biosynthesis; glycosylphosphatidylinositol-anchor biosynthesis. In terms of biological role, involved in glycosylphosphatidylinositol-anchor biosynthesis. Transfers ethanolamine phosphate to the GPI third mannose which links the GPI-anchor to the C-terminus of the proteins by an amide bond. Involved in cell wall biosynthesis. In Schizosaccharomyces pombe (strain 972 / ATCC 24843) (Fission yeast), this protein is GPI ethanolamine phosphate transferase 3 (gpi13).